Reading from the N-terminus, the 427-residue chain is 3-phosphoshikimate 1-carboxyvinyltransferase (427 aa).

Lysine 22, serine 23, and arginine 27 together coordinate 3-phosphoshikimate. Position 22 (lysine 22) interacts with phosphoenolpyruvate. Residues glycine 96 and arginine 124 each coordinate phosphoenolpyruvate. The 3-phosphoshikimate site is built by serine 170, serine 171, glutamine 172, serine 198, aspartate 314, asparagine 337, and lysine 341. Glutamine 172 is a phosphoenolpyruvate binding site. Residue aspartate 314 is the Proton acceptor of the active site. Phosphoenolpyruvate-binding residues include arginine 345, arginine 387, and lysine 412.

This sequence belongs to the EPSP synthase family. Monomer.

It localises to the cytoplasm. It carries out the reaction 3-phosphoshikimate + phosphoenolpyruvate = 5-O-(1-carboxyvinyl)-3-phosphoshikimate + phosphate. It functions in the pathway metabolic intermediate biosynthesis; chorismate biosynthesis; chorismate from D-erythrose 4-phosphate and phosphoenolpyruvate: step 6/7. In terms of biological role, catalyzes the transfer of the enolpyruvyl moiety of phosphoenolpyruvate (PEP) to the 5-hydroxyl of shikimate-3-phosphate (S3P) to produce enolpyruvyl shikimate-3-phosphate and inorganic phosphate. This is 3-phosphoshikimate 1-carboxyvinyltransferase from Sulfurovum sp. (strain NBC37-1).